A 747-amino-acid chain; its full sequence is NAD(P)H-quinone oxidoreductase subunit 5, chloroplastic (747 aa).

The next 16 helical transmembrane spans lie at 8–28, 39–59, 89–109, 125–145, 147–167, 185–205, 231–251, 259–279, 281–301, 328–348, 355–375, 397–417, 426–446, 550–570, 608–628, and 726–746; these read AWIIPFVPLLVTMLIGLELLL, IWAFPAVLLLSIVMVFSTKLA, IDPLTSIMSILITTVGIMVLI, FAYMSFFNTAMLGLVTSPNLI, IHIFWELVGMCSYLLIGFWFT, GDFGLLLGILGFYLITGSFEF, AFLLFLGAVAKSAQFPLHVWL, TPISALIHAATMVAAGIFLVA, LLPLFIAIPYIMNIISLIGVI, LGYMMLALGIGSYRAALFHLI, ALLFLGSGSIIHSMEPIVGYS, TTFFLGTLSLCGIPPLACFWS, WLYSPIFAIIAFYTAGLTAFY, LFPLLILAIFTLFVGCIGIHF, FYSVSIAYFGIFLASVLYGSV, and LFLYLACVSIVLLIYYYYNFL.

It belongs to the complex I subunit 5 family. As to quaternary structure, NDH is composed of at least 16 different subunits, 5 of which are encoded in the nucleus.

The protein localises to the plastid. The protein resides in the chloroplast thylakoid membrane. It catalyses the reaction a plastoquinone + NADH + (n+1) H(+)(in) = a plastoquinol + NAD(+) + n H(+)(out). The catalysed reaction is a plastoquinone + NADPH + (n+1) H(+)(in) = a plastoquinol + NADP(+) + n H(+)(out). Its function is as follows. NDH shuttles electrons from NAD(P)H:plastoquinone, via FMN and iron-sulfur (Fe-S) centers, to quinones in the photosynthetic chain and possibly in a chloroplast respiratory chain. The immediate electron acceptor for the enzyme in this species is believed to be plastoquinone. Couples the redox reaction to proton translocation, and thus conserves the redox energy in a proton gradient. The polypeptide is NAD(P)H-quinone oxidoreductase subunit 5, chloroplastic (ndhF) (Nymphaea alba (White water-lily)).